Here is a 115-residue protein sequence, read N- to C-terminus: Class I hydrophobin 21 (115 aa).

The signal sequence occupies residues Met1–Ala20. Cystine bridges form between Cys30–Cys93, Cys37–Cys87, Cys38–Cys77, and Cys94–Cys107.

Belongs to the fungal hydrophobin family. Self-assembles to form functional amyloid fibrils called rodlets. Self-assembly into fibrillar rodlets occurs spontaneously at hydrophobic:hydrophilic interfaces and the rodlets further associate laterally to form amphipathic monolayers.

The protein resides in the secreted. The protein localises to the cell wall. Its function is as follows. Aerial growth, conidiation, and dispersal of filamentous fungi in the environment rely upon a capability of their secreting small amphipathic proteins called hydrophobins (HPBs) with low sequence identity. Class I can self-assemble into an outermost layer of rodlet bundles on aerial cell surfaces, conferring cellular hydrophobicity that supports fungal growth, development and dispersal; whereas Class II form highly ordered films at water-air interfaces through intermolecular interactions but contribute nothing to the rodlet structure. In Pleurotus ostreatus (strain PC15) (Oyster mushroom), this protein is Class I hydrophobin 21.